A 123-amino-acid polypeptide reads, in one-letter code: Ribosome-binding factor A (123 aa).

The protein belongs to the RbfA family. Monomer. Binds 30S ribosomal subunits, but not 50S ribosomal subunits or 70S ribosomes.

The protein resides in the cytoplasm. Functionally, one of several proteins that assist in the late maturation steps of the functional core of the 30S ribosomal subunit. Associates with free 30S ribosomal subunits (but not with 30S subunits that are part of 70S ribosomes or polysomes). Required for efficient processing of 16S rRNA. May interact with the 5'-terminal helix region of 16S rRNA. The sequence is that of Ribosome-binding factor A from Ralstonia pickettii (strain 12J).